The following is a 306-amino-acid chain: MATELRCPDSMPCHNQQVNSASTQNPEPQQAGDLILAHAGGNSDSAATLTLLSGHAHSSVPAELDPQASGGATFNSENNGGTGNYDAPASDSLLGDCEISRQIGAQLKLLPMNDQIRELQTIIRDKTASRGDFMFSADRLIRLVVEEGLNQLPYEECMVTTPTGFKYEGVKFEKGNCGVSIMRSGEAMEQGLRDCCRSIRIGKILIQSDEETQRAKVYYAKFPPDIYRRKVLLMYPILSTGNTVIEAVKVLIEHGVQPSVIILLSLFSTPHGAKSIIQEFPEITILTTEVHPVAPTHFGQKYFGTD.

Disordered stretches follow at residues 1 to 28 and 58 to 87; these read MATE…NPEP and SSVP…NYDA. Polar residues-rich tracts occupy residues 13 to 28 and 70 to 79; these read CHNQ…NPEP and GGATFNSENN. GTP-binding positions include R130, R139, and 173–176; that span reads EKGN. R183 is a binding site for 5-phospho-alpha-D-ribose 1-diphosphate. Positions 200 and 229 each coordinate GTP. A 5-phospho-alpha-D-ribose 1-diphosphate-binding site is contributed by 235–243; sequence YPILSTGNT. A uracil-binding site is contributed by 296–298; it reads THF.

It belongs to the UPRTase family.

Its subcellular location is the cytoplasm. It localises to the nucleus. The chain is Uracil phosphoribosyltransferase homolog (UPRT) from Bos taurus (Bovine).